We begin with the raw amino-acid sequence, 412 residues long: Imidazolonepropionase (412 aa).

Residues His76 and His78 each contribute to the Fe(3+) site. Residues His76 and His78 each contribute to the Zn(2+) site. Residues Arg85, Tyr148, and His181 each contribute to the 4-imidazolone-5-propanoate site. Tyr148 provides a ligand contact to N-formimidoyl-L-glutamate. A Fe(3+)-binding site is contributed by His242. Zn(2+) is bound at residue His242. Glu245 contacts 4-imidazolone-5-propanoate. Asp317 lines the Fe(3+) pocket. Asp317 contributes to the Zn(2+) binding site. Asn319 and Gly321 together coordinate N-formimidoyl-L-glutamate. Ser322 contributes to the 4-imidazolone-5-propanoate binding site.

The protein belongs to the metallo-dependent hydrolases superfamily. HutI family. The cofactor is Zn(2+). Fe(3+) serves as cofactor.

It localises to the cytoplasm. The enzyme catalyses 4-imidazolone-5-propanoate + H2O = N-formimidoyl-L-glutamate. It functions in the pathway amino-acid degradation; L-histidine degradation into L-glutamate; N-formimidoyl-L-glutamate from L-histidine: step 3/3. Functionally, catalyzes the hydrolytic cleavage of the carbon-nitrogen bond in imidazolone-5-propanoate to yield N-formimidoyl-L-glutamate. It is the third step in the universal histidine degradation pathway. This is Imidazolonepropionase from Staphylococcus saprophyticus subsp. saprophyticus (strain ATCC 15305 / DSM 20229 / NCIMB 8711 / NCTC 7292 / S-41).